The following is a 245-amino-acid chain: U11/U12 small nuclear ribonucleoprotein 35 kDa protein (245 aa).

One can recognise an RRM domain in the interval 51–129 (LTLFVARLNL…HEIFVDYELE (79 aa)). Basic and acidic residues predominate over residues 146–162 (GKKESGQLRFGGRDRPF). A disordered region spans residues 146 to 165 (GKKESGQLRFGGRDRPFRKP). A Glycyl lysine isopeptide (Lys-Gly) (interchain with G-Cter in SUMO2) cross-link involves residue lysine 172. Residues 173–222 (NDQFREGKRERRERSRSRERHWDSRMRDHHDRGREKRWQEREPARAWPEG) form a disordered region. Basic and acidic residues-rich tracts occupy residues 174–185 (DQFREGKRERRE) and 192–216 (RHWD…REPA).

In terms of assembly, component of the U11/U12 snRNPs that are part of the U12-type spliceosome.

The protein resides in the nucleus. The sequence is that of U11/U12 small nuclear ribonucleoprotein 35 kDa protein (SNRNP35) from Bos taurus (Bovine).